A 507-amino-acid chain; its full sequence is ATP-dependent RNA helicase DDX47 (507 aa).

The segment covering 1–31 (MSETSEDEQTQLQTSDEEEDLGSEEEQEDED) has biased composition (acidic residues). The segment at 1–58 (MSETSEDEQTQLQTSDEEEDLGSEEEQEDEDNNHKEGDSEAALSGEDDKGSEDDAAEE) is disordered. Positions 61–89 (LTWKDLGLNEALCQACDELKWKAPSKIQR) match the Q motif motif. The 172-residue stretch at 92 to 263 (IPVALQGKDV…RASLKDPVKV (172 aa)) folds into the Helicase ATP-binding domain. An ATP-binding site is contributed by 105 to 112 (AETGSGKT). The DEAD box signature appears at 211 to 214 (DEAD). One can recognise a Helicase C-terminal domain in the interval 290 to 434 (YLVHILNELA…LYKCEEDEVM (145 aa)). Residues 426-453 (YKCEEDEVMALQERVAEAQRTAKLELKD) adopt a coiled-coil conformation. A compositionally biased stretch (basic and acidic residues) spans 451-471 (LKDLEDTRGGHKRGGDTHDDS). Residues 451–507 (LKDLEDTRGGHKRGGDTHDDSENFTGARKRMKPMGGTGGGGRKSFGKKNWSKGKQKR) form a disordered region. A compositionally biased stretch (basic residues) spans 494–507 (SFGKKNWSKGKQKR).

This sequence belongs to the DEAD box helicase family. DDX47/RRP3 subfamily.

The protein resides in the nucleus. It localises to the nucleolus. The catalysed reaction is ATP + H2O = ADP + phosphate + H(+). Functionally, part of a translational control module, also containing ath/DHX33 and ais/DDX52, which coordinates germline stem cell differentiation with ribosome biogenesis during oogenesis. This module allows for coregulation of ribosomal proteins and non1/GTPBP4, a p53 repressor, preventing p53 stabilization, cell cycle arrest and loss of stem cell differentiation. With atos, adjusts transcription and translation of a subset of OXPHOS genes in macrophages to increase mitochondrial bioenergetics and allow tissue invasion. In Drosophila melanogaster (Fruit fly), this protein is ATP-dependent RNA helicase DDX47.